The sequence spans 355 residues: Transcription factor TCP13 (355 aa).

A disordered region spans residues 1-57 (MNIVSWKDANDEVAGGATTRREREVKEDQEETEVRATSGKTVIKKQPTSISSSSSSW). The TCP domain maps to 74-132 (GKDRHSKVCTLRGLRDRRVRLSVPTAIQLYDLQERLGVDQPSKAVDWLLDAAKEEIDEL). The tract at residues 329–355 (TNSTTTANMSRHLGSERCTSRGSDHHM) is disordered. Residues 341-355 (LGSERCTSRGSDHHM) are compositionally biased toward basic and acidic residues.

As to quaternary structure, interacts with AHL27 and AHL29. Interacts with SPL. Interacts with KIN10; KIN11 and FLZ3. Expressed in cotyledons, particularly in the vascular region, in leaves, buds, flowers and immature siliques, and, to a lower extent, in roots.

Its subcellular location is the nucleus. It localises to the plastid. The protein resides in the chloroplast. Plays a pivotal role in the control of morphogenesis of shoot organs by negatively regulating the expression of boundary-specific genes such as CUC genes, probably through the induction of miRNA (e.g. miR164). Binds to the 3'-ACC-5' repeats in the light-responsive promoter (LRP) of psbD, and activates its transcription. Participates in ovule development. The polypeptide is Transcription factor TCP13 (TCP13) (Arabidopsis thaliana (Mouse-ear cress)).